The chain runs to 526 residues: Vitamin B6 transporter bsu1 (526 aa).

The tract at residues methionine 1–glutamate 53 is disordered. The segment covering glycine 38 to glutamate 53 has biased composition (basic and acidic residues). The next 12 helical transmembrane spans lie at tryptophan 81–phenylalanine 101, valine 118–glycine 138, lysine 147–proline 167, methionine 173–alanine 192, alanine 204–methionine 224, tryptophan 238–isoleucine 257, leucine 314–isoleucine 330, tyrosine 349–glutamine 366, phenylalanine 387–threonine 407, proline 413–tryptophan 432, proline 444–glycine 461, and tryptophan 480–phenylalanine 501.

It belongs to the major facilitator superfamily. CAR1 family.

The protein localises to the membrane. Thiamine-regulated, high affinity import carrier of pyridoxine, pyridoxal and pyridoxamine. Also imports, but does not export, amiloride and so confers sensitivity. This is Vitamin B6 transporter bsu1 (bsu1) from Schizosaccharomyces pombe (strain 972 / ATCC 24843) (Fission yeast).